A 203-amino-acid chain; its full sequence is ATP-dependent Clp protease proteolytic subunit 1 (203 aa).

Ser103 functions as the Nucleophile in the catalytic mechanism. The active site involves His128.

Belongs to the peptidase S14 family. In terms of assembly, fourteen ClpP subunits assemble into 2 heptameric rings which stack back to back to give a disk-like structure with a central cavity, resembling the structure of eukaryotic proteasomes.

Its subcellular location is the cytoplasm. The enzyme catalyses Hydrolysis of proteins to small peptides in the presence of ATP and magnesium. alpha-casein is the usual test substrate. In the absence of ATP, only oligopeptides shorter than five residues are hydrolyzed (such as succinyl-Leu-Tyr-|-NHMec, and Leu-Tyr-Leu-|-Tyr-Trp, in which cleavage of the -Tyr-|-Leu- and -Tyr-|-Trp bonds also occurs).. In terms of biological role, cleaves peptides in various proteins in a process that requires ATP hydrolysis. Has a chymotrypsin-like activity. Plays a major role in the degradation of misfolded proteins. This chain is ATP-dependent Clp protease proteolytic subunit 1, found in Treponema pallidum (strain Nichols).